The chain runs to 218 residues: Small ribosomal subunit protein uS3 (218 aa).

The region spanning 38–106 (IREYINKRLQ…RVHINIVEIK (69 aa)) is the KH type-2 domain.

The protein belongs to the universal ribosomal protein uS3 family. As to quaternary structure, part of the 30S ribosomal subunit. Forms a tight complex with proteins S10 and S14.

Binds the lower part of the 30S subunit head. Binds mRNA in the 70S ribosome, positioning it for translation. The chain is Small ribosomal subunit protein uS3 from Geobacillus sp. (strain WCH70).